Consider the following 3018-residue polypeptide: Genome polyprotein (3018 aa).

S2 carries the N-acetylserine; by host modification. An interaction with STAT1 region spans residues 2–23; that stretch reads STLPKPQRKTKRNTNRRPMDVK. The tract at residues 2–58 is interaction with EIF2AK2/PKR; it reads STLPKPQRKTKRNTNRRPMDVKFPGGGQIVGGVYLLPRKGPRLGVRATRKTSERSQP. The segment at 2–59 is interaction with DDX3X; it reads STLPKPQRKTKRNTNRRPMDVKFPGGGQIVGGVYLLPRKGPRLGVRATRKTSERSQPR. Residues 2–75 are disordered; the sequence is STLPKPQRKT…PKARQPQGRH (74 aa). The Cytoplasmic portion of the chain corresponds to 2 to 168; sequence STLPKPQRKT…EDGINYATGN (167 aa). Short sequence motifs (nuclear localization signal) lie at residues 5-13 and 38-43; these read PKPQRKTKR and PRKGPR. Positions 7–16 are enriched in basic residues; it reads PQRKTKRNTN. A Phosphoserine; by host modification is found at S53. 2 consecutive short sequence motifs (nuclear localization signal) follow at residues 58–64 and 66–71; these read PRGRRQP and PKARQP. Residues S99 and S116 each carry the phosphoserine; by host modification. The tract at residues 112-152 is important for endoplasmic reticulum and mitochondrial localization; sequence PRRRSRNLGKVIDTLTCGFADLMWYIPVVGAPLGGVAAALA. Residues 122 to 173 are interaction with APOA2; sequence VIDTLTCGFADLMWYIPVVGAPLGGVAAALAHGVRAIEDGINYATGNLPGCS. The tract at residues 164-167 is important for lipid droplets localization; the sequence is YATG. The helical transmembrane segment at 169–189 threads the bilayer; the sequence is LPGCSFSIFLLALLSCLTTPA. Residues 178-191 constitute a propeptide, ER anchor for the core protein, removed in mature form by host signal peptidase; that stretch reads LLALLSCLTTPASA. The Lumenal segment spans residues 190–358; it reads SALTYGNSSG…FGGHWGILLA (169 aa). 4 N-linked (GlcNAc...) asparagine; by host glycosylation sites follow: N196, N209, N234, and N250. Residues 265 to 296 are important for fusion; the sequence is LAGAAVVCSSLYIGDLCGSLFLAGQLFAFQPR. An N-linked (GlcNAc...) asparagine; by host glycan is attached at N305. Residues 359–379 form a helical membrane-spanning segment; it reads VAYFGMAGNWLKVLAVLFLFA. At 380–729 the chain is on the lumenal side; the sequence is GVEAQTMIAH…WEYIVLMFLV (350 aa). An HVR1 region spans residues 385–411; sequence TMIAHGVSQTTSGFASLLTPGAKQNIQ. N-linked (GlcNAc...) (high mannose) asparagine; by host glycans are attached at residues N416, N422, and N429. Disulfide bonds link C428-C552, C451-C458, C486-C494, and C503-C508. Residue N447 is glycosylated (N-linked (GlcNAc...) asparagine; by host). Residues 474–478 form an HVR2 region; that stretch reads KNVSG. N-linked (GlcNAc...) asparagine; by host glycosylation occurs at N475. Positions 480-493 are CD81-binding 1; that stretch reads SDDRPYCWHYAPRP. An N-linked (GlcNAc...) asparagine; by host glycan is attached at N532. Residues 544–551 form a CD81-binding 2 region; it reads PPTGGWFG. N556 carries an N-linked (GlcNAc...) asparagine; by host glycan. An intrachain disulfide couples C564 to C569. An N-linked (GlcNAc...) asparagine; by host glycan is attached at N577. 3 disulfide bridges follow: C585–C589, C601–C624, and C611–C648. N627 and N649 each carry an N-linked (GlcNAc...) (high mannose) asparagine; by host glycan. An intrachain disulfide couples C656 to C681. The interval 664–675 is PKR/eIF2-alpha phosphorylation homology domain (PePHD); that stretch reads IEMSPLLFSTTQ. Residues 730-750 form a helical membrane-spanning segment; sequence LADARICTCLWLMLLISTVEA. The Lumenal segment spans residues 751–761; the sequence is AVERLVVLNAA. A helical membrane pass occupies residues 762–782; it reads SAAGTAGWWWAVLFLCCVWYV. Residues 783–786 lie on the Cytoplasmic side of the membrane; it reads KGRL. Residues 787–807 traverse the membrane as a helical segment; that stretch reads VPACTYMALGMWPLLLTILAL. Residues 808–817 are Lumenal-facing; it reads PPRAYAMDNE. Residues 818-838 traverse the membrane as a helical segment; that stretch reads QAASLGAVGLLVITIFSITPM. Residues 839–885 are Cytoplasmic-facing; that stretch reads YKKLLNCFIWWNQYFLARAEAMVHEWVPDLRVRGGRDSIILLTCLLH. The helical transmembrane segment at 886–906 threads the bilayer; sequence PQLGFEVTKILLAVLAPLYIL. The Lumenal segment spans residues 907–932; that stretch reads QYSLLKVPYFVRAHILLRACLLVRRL. Positions 907–1030 constitute a Peptidase C18 domain; it reads QYSLLKVPYF…DMQRGGWKLL (124 aa). The segment at 908–1210 is protease NS2-3; the sequence is YSLLKVPYFV…PVENMETTMR (303 aa). Residue C926 is the site of S-palmitoyl cysteine; by host attachment. Residues 933 to 953 traverse the membrane as a helical segment; it reads AGGKYVQACLLRLGAWTGTFV. The interaction with host SCPS1 stretch occupies residues 933–953; the sequence is AGGKYVQACLLRLGAWTGTFV. Topologically, residues 954-1661 are cytoplasmic; that stretch reads YDHLAPLSDW…CMSADLEVIT (708 aa). Catalysis depends on for protease NS2 activity; shared with dimeric partner residues H956, E976, and C997. The Peptidase S29 domain occupies 1031-1212; the sequence is APITAYAQQT…ENMETTMRSP (182 aa). Active-site charge relay system; for serine protease NS3 activity residues include H1087 and D1111. Zn(2+) contacts are provided by C1127 and C1129. Catalysis depends on S1169, which acts as the Charge relay system; for serine protease NS3 activity. 2 residues coordinate Zn(2+): C1175 and H1179. 1234 to 1241 provides a ligand contact to ATP; the sequence is APTGSGKS. The Mg(2+) site is built by S1241 and E1321. A DECH box motif is present at residues 1320–1323; sequence DECH. Residues 1490 to 1502 form an RNA-binding region; the sequence is QRRGRTGRGKPGV. Residues 1662-1682 form a helical membrane-spanning segment; sequence STWVLVGGVLAALAAYCLSVG. Residues 1683–1694 form an NS3-binding region; it reads CVVICGRITLTG. The Cytoplasmic segment spans residues 1683 to 1809; it reads CVVICGRITL…SLTSPLRTSQ (127 aa). A helical membrane pass occupies residues 1810–1830; that stretch reads TLLLNILGGWIAAQVAPPPAS. Over 1831 to 1832 the chain is Lumenal; sequence TA. The helical transmembrane segment at 1833–1853 threads the bilayer; that stretch reads FVVSGLAGAAVGSIRLGRVLV. A topological domain (cytoplasmic) is located at residue D1854. Residues 1855 to 1875 traverse the membrane as a helical segment; it reads VLAGYGAGVSGALVAFKIMSG. Topologically, residues 1876 to 1885 are lumenal; the sequence is ECPSTEDMVN. The helical transmembrane segment at 1886–1906 threads the bilayer; sequence LLPALLSPGVALVGVVCAAIL. The Cytoplasmic portion of the chain corresponds to 1907-1976; it reads RRHVGPAEGA…WVNEDTATPC (70 aa). C1976 carries S-palmitoyl cysteine; by host lipidation. An intramembrane segment occupies 1977–2006; the sequence is ATSWLRDVWDWVCTVLSDFKVWLQAKLFPR. Residues 2007 to 2997 lie on the Cytoplasmic side of the membrane; sequence LPGIPFLSCQ…YHSVSQARPR (991 aa). Residues C2015, C2033, C2035, and C2056 each contribute to the Zn(2+) site. An FKBP8-binding region spans residues 2124-2212; it reads EFFTEVDGVR…ASSSANQLSA (89 aa). Residues 2124-2337 form a transcriptional activation region; it reads EFFTEVDGVR…PVPPPRRKRL (214 aa). Residues 2139 to 2143 are interaction with non-structural protein 4A; it reads PPCKP. A disordered region spans residues 2192 to 2215; that stretch reads RRLKKGSPPSLASSSANQLSAPSL. Positions 2193–2445 are interaction with host SKP2; it reads RLKKGSPPSL…ALITPCAAEE (253 aa). Residues S2198, S2201, S2205, S2211, and S2214 each carry the phosphoserine; by host modification. The span at 2198 to 2215 shows a compositional bias: low complexity; sequence SPPSLASSSANQLSAPSL. The ISDR stretch occupies residues 2214 to 2253; the sequence is SLRATCTTSQKHPEMELLQANLLWKHEMGSHIPRVQSENK. The interaction with EIF2AK2/PKR stretch occupies residues 2214–2279; it reads SLRATCTTSQ…REISVSVECH (66 aa). The NS4B-binding stretch occupies residues 2253–2311; sequence KVVVLDSFELYPLEYEEREISVSVECHRQPRCKFPPVFPVWARPDNNPPFIQAWQMPGY. Residues 2304 to 2382 form a V3 region; the sequence is QAWQMPGYEP…SITSPVPPDP (79 aa). The SH3-binding signature appears at 2327-2330; it reads APVP. The Nuclear localization signal signature appears at 2332-2340; sequence PRRKRLVHL. K2355 is covalently cross-linked (Glycyl lysine isopeptide (Lys-Gly) (interchain with G-Cter in ubiquitin)). The disordered stretch occupies residues 2359-2417; sequence ESSNDPGPSSDSGLSITSPVPPDPTTPEDAGSEAESYSSMPPLEGEPGDPDLSSGSWST. Low complexity predominate over residues 2360-2373; that stretch reads SSNDPGPSSDSGLS. A phosphoserine; by host mark is found at S2456 and S2469. In terms of domain architecture, RdRp catalytic spans 2641–2759; that stretch reads PMGFSYDTRC…ICESAGVQED (119 aa). Residues D2647, D2745, and D2746 each coordinate Mg(2+). The chain crosses the membrane as a helical span at residues 2998–3018; it reads FLLLGLLLLTVGVGIFLLPAR.

Belongs to the hepacivirus polyprotein family. Homooligomer. Interacts with E1 (via C-terminus). Interacts with the non-structural protein 5A. Interacts (via N-terminus) with host STAT1 (via SH2 domain); this interaction results in decreased STAT1 phosphorylation and ubiquitin-mediated proteasome-dependent STAT1 degradation, leading to decreased IFN-stimulated gene transcription. Interacts with host STAT3; this interaction constitutively activates STAT3. Interacts with host LTBR receptor. Interacts with host TNFRSF1A receptor and possibly induces apoptosis. Interacts with host HNRPK. Interacts with host YWHAE. Interacts with host UBE3A/E6AP. Interacts with host DDX3X. Interacts with host APOA2. Interacts with host RXRA protein. Interacts with host SP110 isoform 3/Sp110b; this interaction sequesters the transcriptional corepressor SP110 away from the nucleus. Interacts with host CREB3 nuclear transcription protein; this interaction triggers cell transformation. Interacts with host ACY3. Interacts with host C1QR1. Interacts with host RBM24; this interaction, which enhances the interaction of the mature core protein with 5'-UTR, may inhibit viral translation and favor replication. Interacts with host EIF2AK2/PKR; this interaction induces the autophosphorylation of EIF2AK2. Part of the viral assembly initiation complex composed of NS2, E1, E2, NS3, NS4A, NS5A and the mature core protein. In terms of assembly, forms a heterodimer with envelope glycoprotein E2. Interacts with mature core protein. Interacts with protease NS2. The heterodimer E1/E2 interacts with host CLDN1; this interaction plays a role in viral entry into host cell. Interacts with host SPSB2 (via C-terminus). Part of the viral assembly initiation complex composed of NS2, E1, E2, NS3, NS4A, NS5A and the mature core protein. Interacts with host NEURL3; this interaction prevents E1 binding to glycoprotein E2. As to quaternary structure, forms a heterodimer with envelope glycoprotein E1. Interacts with host CD81 and SCARB1 receptors; these interactions play a role in viral entry into host cell. Interacts with host EIF2AK2/PKR; this interaction inhibits EIF2AK2 and probably allows the virus to evade the innate immune response. Interacts with host CD209/DC-SIGN and CLEC4M/DC-SIGNR. Interact with host SPCS1; this interaction is essential for viral particle assembly. Interacts with protease NS2. The heterodimer E1/E2 interacts with host CLDN1; this interaction plays a role in viral entry into host cell. Part of the viral assembly initiation complex composed of NS2, E1, E2, NS3, NS4A, NS5A and the mature core protein. Interacts with host SLC3A2/4F2hc; the interaction may facilitate viral entry into host cell. Interacts with human PLSCR1. Homohexamer. Homoheptamer. Interacts with protease NS2. In terms of assembly, homodimer. Interacts with host SPCS1; this interaction is essential for viral particle assembly. Interacts with envelope glycoprotein E1. Interacts with envelope glycoprotein E2. Interacts with viroporin p7. Interacts with serine protease/helicase NS3. Part of the replication complex composed of NS2, NS3, NS4A, NS4B, NS5A and the RNA-directed RNA polymerase embedded in an ER-derived membranous web. Part of the viral assembly initiation complex composed of NS2, E1, E2, NS3, NS4A, NS5A and the mature core protein. As to quaternary structure, interacts with protease NS2. Interacts with non-structural protein 4A; this interaction stabilizes the folding of NS3 serine protease. NS3-NS4A interaction is essential for NS3 activation and allows membrane anchorage of the latter. NS3/NS4A complex also prevents phosphorylation of host IRF3, thus preventing the establishment of dsRNA induced antiviral state. Interacts with host MAVS; this interaction leads to the cleavage and inhibition of host MAVS. Interacts with host TICAM1; this interaction leads to the cleavage and inhibition of host TICAM1. Interacts with host TANK-binding kinase/TBK1; this interaction results in the inhibition of the association between TBK1 and IRF3, which leads to the inhibition of IRF3 activation. Interacts with host RBM24. Part of the replication complex composed of NS2, NS3, NS4A, NS4B, NS5A and the RNA-directed RNA polymerase embedded in an ER-derived membranous web. Part of the viral assembly initiation complex composed of NS2, E1, E2, NS3, NS4A, NS5A and the mature core protein. Interacts with NS3 serine protease; this interaction stabilizes the folding of NS3 serine protease. NS3-NS4A interaction is essential for NS3 activation and allows membrane anchorage of the latter. Interacts with non-structural protein 5A (via N-terminus). Part of the replication complex composed of NS2, NS3, NS4A, NS4B, NS5A and the RNA-directed RNA polymerase embedded in an ER-derived membranous web. Part of the viral assembly initiation complex composed of NS2, E1, E2, NS3, NS4A, NS5A and the mature core protein. In terms of assembly, homomultimer. Interacts with non-structural protein NS5A. Interacts with host PLA2G4C; this interaction likely initiates the recruitment of replication complexes to lipid droplets. Interacts with host STING; this interaction disrupts the interaction between STING and TBK1 thereby suppressing the interferon signaling. Part of the replication complex composed of NS2, NS3, NS4A, NS4B, NS5A and the RNA-directed RNA polymerase embedded in an ER-derived membranous web. As to quaternary structure, monomer. Homodimer; dimerization is required for RNA-binding. Interacts with the mature core protein. Interacts (via N-terminus) with non-structural protein 4A. Interacts with non-structural protein 4B. Interacts (via region D2) with RNA-directed RNA polymerase. Part of the viral assembly initiation complex composed of NS2, E1, E2, NS3, NS4A, NS5A and the mature core protein. Part of the replication complex composed of NS2, NS3, NS4A, NS4B, NS5A and the RNA-directed RNA polymerase embedded in an ER-derived membranous web. Interacts with host GRB2. Interacts with host BIN1. Interacts with host PIK3R1. Interacts with host SRCAP. Interacts with host FKBP8. Interacts (via C-terminus) with host VAPB (via MSP domain). Interacts with host EIF2AK2/PKR; this interaction leads to disruption of EIF2AK2 dimerization by NS5A and probably allows the virus to evade the innate immune response. Interacts (via N-terminus) with host PACSIN2 (via N-terminus); this interaction attenuates protein kinase C alpha-mediated phosphorylation of PACSIN2 by disrupting the interaction between PACSIN2 and PRKCA. Interacts (via N-terminus) with host SRC kinase (via SH2 domain). Interacts with most Src-family kinases. Interacts with host IFI27 and SKP2; promotes the ubiquitin-mediated proteasomal degradation of NS5A. Interacts with host GPS2. Interacts with host TNFRSF21; this interaction allows the modulation by the virus of JNK, p38 MAPK, STAT3, and Akt signaling pathways in a DR6-dependent manner. Interacts (via N-terminus) with host CIDEB (via N-terminus); this interaction seems to regulate the association of HCV particles with APOE. Interacts with host CHKA/Choline Kinase-alpha; CHKA bridges host PI4KA and NS5A and potentiates NS5A-stimulated PI4KA activity, which then facilitates the targeting of the ternary complex to the ER for viral replication. Interacts with host SPSB2 (via C-terminus); this interaction targets NS5A for ubiquitination and degradation. Interacts with host RAB18; this interaction may promote the association of NS5A and other replicase components with lipid droplets. Interacts (via region D2) with host PPIA/CYPA; the interaction stimulates RNA-binding ability of NS5A and is dependent on the peptidyl-prolyl cis-trans isomerase activity of PPIA/CYPA. Interacts with host TRIM14; this interaction induces the degradation of NS5A. Homooligomer. Interacts with non-structural protein 5A. Interacts with host VAPB. Interacts with host PRK2/PKN2. Interacts with host HNRNPA1 and SEPT6; these interactions facilitate viral replication. Part of the replication complex composed of NS2, NS3, NS4A, NS4B, NS5A and the RNA-directed RNA polymerase. Requires Zn(2+) as cofactor. It depends on Mg(2+) as a cofactor. In terms of processing, specific enzymatic cleavages in vivo yield mature proteins. The structural proteins, core, E1, E2 and p7 are produced by proteolytic processing by host signal peptidases. The core protein precursor is synthesized as a 23 kDa, which is retained in the ER membrane through the hydrophobic signal peptide. Cleavage by the signal peptidase releases the 21 kDa mature core protein. The cleavage of the core protein precursor occurs between aminoacids 176 and 188 but the exact cleavage site is not known. Some degraded forms of the core protein appear as well during the course of infection. The other proteins (p7, NS2, NS3, NS4A, NS4B, NS5A and NS5B) are cleaved by the viral proteases. Autoprocessing between NS2 and NS3 is mediated by the NS2 cysteine protease catalytic domain and regulated by the NS3 N-terminal domain. Phosphorylated by host PKC and PKA. Post-translationally, ubiquitinated; mediated by UBE3A and leading to core protein subsequent proteasomal degradation. In terms of processing, highly N-glycosylated. Palmitoylation is required for NS2/3 autoprocessing and E2 recruitment to membranes. Post-translationally, palmitoylated. This modification may play a role in its polymerization or in protein-protein interactions. In terms of processing, phosphorylated on serines in a basal form termed p56. p58 is a hyperphosphorylated form of p56. p56 and p58 coexist in the cell in roughly equivalent amounts. Hyperphosphorylation is dependent on the presence of NS4A. Host CSNK1A1/CKI-alpha or RPS6KB1 kinases may be responsible for NS5A phosphorylation. Tyrosine phosphorylation is essential for the interaction with host SRC. Post-translationally, the N-terminus is phosphorylated by host PRK2/PKN2.

Its subcellular location is the host endoplasmic reticulum membrane. The protein localises to the host mitochondrion membrane. The protein resides in the virion. It is found in the host cytoplasm. It localises to the host nucleus. Its subcellular location is the host lipid droplet. The protein localises to the virion membrane. The protein resides in the host mitochondrion. It is found in the host cell membrane. It localises to the host perinuclear region. The catalysed reaction is Hydrolysis of four peptide bonds in the viral precursor polyprotein, commonly with Asp or Glu in the P6 position, Cys or Thr in P1 and Ser or Ala in P1'.. It catalyses the reaction a ribonucleoside 5'-triphosphate + H2O = a ribonucleoside 5'-diphosphate + phosphate + H(+). It carries out the reaction ATP + H2O = ADP + phosphate + H(+). The enzyme catalyses RNA(n) + a ribonucleoside 5'-triphosphate = RNA(n+1) + diphosphate. With respect to regulation, inhibited by the antiviral drug hexamethylene amiloride. Inhibition by amantadine appears to be genotype-dependent. Also inhibited by long-alkyl-chain iminosugar derivatives. Its activity is regulated as follows. Activity is up-regulated by PRK2/PKN2-mediated phosphorylation. Functionally, packages viral RNA to form a viral nucleocapsid, and promotes virion budding. Participates in the viral particle production as a result of its interaction with the non-structural protein 5A. Binds RNA and may function as a RNA chaperone to induce the RNA structural rearrangements taking place during virus replication. Modulates viral translation initiation by interacting with viral IRES and 40S ribosomal subunit. Affects various cell signaling pathways, host immunity and lipid metabolism. Prevents the establishment of cellular antiviral state by blocking the interferon-alpha/beta (IFN-alpha/beta) and IFN-gamma signaling pathways and by blocking the formation of phosphorylated STAT1 and promoting ubiquitin-mediated proteasome-dependent degradation of STAT1. Activates STAT3 leading to cellular transformation. Regulates the activity of cellular genes, including c-myc and c-fos. May repress the promoter of p53, and sequester CREB3 and SP110 isoform 3/Sp110b in the cytoplasm. Represses cell cycle negative regulating factor CDKN1A, thereby interrupting an important check point of normal cell cycle regulation. Targets transcription factors involved in the regulation of inflammatory responses and in the immune response: suppresses TNF-induced NF-kappa-B activation, and activates AP-1. Binds to dendritic cells (DCs) via C1QR1, resulting in down-regulation of T-lymphocytes proliferation. Alters lipid metabolism by interacting with hepatocellular proteins involved in lipid accumulation and storage. Induces up-regulation of FAS promoter activity, and thereby contributes to the increased triglyceride accumulation in hepatocytes (steatosis). In terms of biological role, forms a heterodimer with envelope glycoprotein E2, which mediates virus attachment to the host cell, virion internalization through clathrin-dependent endocytosis and fusion with host membrane. Fusion with the host cell is most likely mediated by both E1 and E2, through conformational rearrangements of the heterodimer required for fusion rather than a classical class II fusion mechanism. E1/E2 heterodimer binds host apolipoproteins such as APOB and ApoE thereby forming a lipo-viro-particle (LVP). APOE associated to the LVP allows the initial virus attachment to cell surface receptors such as the heparan sulfate proteoglycans (HSPGs), syndecan-1 (SDC1), syndecan-1 (SDC2), the low-density lipoprotein receptor (LDLR) and scavenger receptor class B type I (SCARB1). The cholesterol transfer activity of SCARB1 allows E2 exposure and binding of E2 to SCARB1 and the tetraspanin CD81. E1/E2 heterodimer binding on CD81 activates the epithelial growth factor receptor (EGFR) signaling pathway. Diffusion of the complex E1-E2-EGFR-SCARB1-CD81 to the cell lateral membrane allows further interaction with Claudin 1 (CLDN1) and occludin (OCLN) to finally trigger HCV entry. Its function is as follows. Forms a heterodimer with envelope glycoprotein E1, which mediates virus attachment to the host cell, virion internalization through clathrin-dependent endocytosis and fusion with host membrane. Fusion with the host cell is most likely mediated by both E1 and E2, through conformational rearrangements of the heterodimer required for fusion rather than a classical class II fusion mechanism. The interaction between envelope glycoprotein E2 and host apolipoprotein E/APOE allows the proper assembly, maturation and infectivity of the viral particles. This interaction is probably promoted via the up-regulation of cellular autophagy by the virus. E1/E2 heterodimer binds host apolipoproteins such as APOB and APOE thereby forming a lipo-viro-particle (LVP). APOE associated to the LVP allows the initial virus attachment to cell surface receptors such as the heparan sulfate proteoglycans (HSPGs), syndecan-1 (SDC1), syndecan-1 (SDC2), the low-density lipoprotein receptor (LDLR) and scavenger receptor class B type I (SCARB1). The cholesterol transfer activity of SCARB1 allows E2 exposure and binding of E2 to SCARB1 and the tetraspanin CD81. E1/E2 heterodimer binding on CD81 activates the epithelial growth factor receptor (EGFR) signaling pathway. Diffusion of the complex E1-E2-EGFR-SCARB1-CD81 to the cell lateral membrane allows further interaction with Claudin 1 (CLDN1) and occludin (OCLN) to finally trigger HCV entry. Inhibits host EIF2AK2/PKR activation, preventing the establishment of an antiviral state. Viral ligand for CD209/DC-SIGN and CLEC4M/DC-SIGNR, which are respectively found on dendritic cells (DCs), and on liver sinusoidal endothelial cells and macrophage-like cells of lymph node sinuses. These interactions allow the capture of circulating HCV particles by these cells and subsequent facilitated transmission to permissive cells such as hepatocytes and lymphocyte subpopulations. The interaction between E2 and host amino acid transporter complex formed by SLC3A2 and SLC7A5/LAT1 may facilitate viral entry into host cell. Ion channel protein that acts as a viroporin and plays an essential role in the assembly, envelopment and secretion of viral particles. Regulates the host cell secretory pathway, which induces the intracellular retention of viral glycoproteins and favors assembly of viral particles. Creates a pore in acidic organelles and releases Ca(2+) and H(+) in the cytoplasm of infected cells, leading to a productive viral infection. High levels of cytoplasmic Ca(2+) may trigger membrane trafficking and transport of viral ER-associated proteins to viroplasms, sites of viral genome replication. This ionic imbalance induces the assembly of the inflammasome complex, which triggers the maturation of pro-IL-1beta into IL-1beta through the action of caspase-1. Targets also host mitochondria and induces mitochondrial depolarization. In addition of its role as a viroporin, acts as a lipid raft adhesion factor. Functionally, cysteine protease required for the proteolytic auto-cleavage between the non-structural proteins NS2 and NS3. The N-terminus of NS3 is required for the function of NS2 protease (active region NS2-3). Promotes the initiation of viral particle assembly by mediating the interaction between structural and non-structural proteins. In terms of biological role, displays three enzymatic activities: serine protease with a chymotrypsin-like fold, NTPase and RNA helicase. NS3 serine protease, in association with NS4A, is responsible for the cleavages of NS3-NS4A, NS4A-NS4B, NS4B-NS5A and NS5A-NS5B. The NS3/NS4A complex prevents phosphorylation of host IRF3, thus preventing the establishment of dsRNA induced antiviral state. The NS3/NS4A complex induces host amino acid transporter component SLC3A2, thus contributing to HCV propagation. NS3 RNA helicase binds to RNA and unwinds both dsDNA and dsRNA in the 3' to 5' direction, and likely resolves RNA complicated stable secondary structures in the template strand. Binds a single ATP and catalyzes the unzipping of a single base pair of dsRNA. Inhibits host antiviral proteins TBK1 and IRF3 thereby preventing the establishment of an antiviral state. Cleaves host MAVS/CARDIF thereby preventing the establishment of an antiviral state. Cleaves host TICAM1/TRIF, thereby disrupting TLR3 signaling and preventing the establishment of an antiviral state. Its function is as follows. Induces a specific membrane alteration that serves as a scaffold for the virus replication complex. This membrane alteration gives rise to the so-called ER-derived membranous web that contains the replication complex. NS4B self-interaction contributes to its function in membranous web formation. Promotes host TRIF protein degradation in a CASP8-dependent manner thereby inhibiting host TLR3-mediated interferon signaling. Disrupts the interaction between STING and TBK1 contributing to the inhibition of interferon signaling. Phosphorylated protein that is indispensable for viral replication and assembly. Both hypo- and hyperphosphorylated states are required for the viral life cycle. The hyperphosphorylated form of NS5A is an inhibitor of viral replication. Involved in RNA-binding and especially in binding to the viral genome. Zinc is essential for RNA-binding. Participates in the viral particle production as a result of its interaction with the mature viral core protein. Its interaction with host VAPB may target the viral replication complex to vesicles. Down-regulates viral IRES translation initiation. Mediates interferon resistance, presumably by interacting with and inhibiting host EIF2AK2/PKR. Prevents BIN1-induced apoptosis. Acts as a transcriptional activator of some host genes important for viral replication when localized in the nucleus. Via the interaction with host PACSIN2, modulates lipid droplet formation in order to promote virion assembly. Modulates TNFRSF21/DR6 signaling pathway for viral propagation. Functionally, RNA-dependent RNA polymerase that performs primer-template recognition and RNA synthesis during viral replication. Initiates RNA transcription/replication at a flavin adenine dinucleotide (FAD), resulting in a 5'- FAD cap on viral RNAs. In this way, recognition of viral 5' RNA by host pattern recognition receptors can be bypassed, thereby evading activation of antiviral pathways. The polypeptide is Genome polyprotein (Hepatitis C virus genotype 6a (isolate EUHK2) (HCV)).